Reading from the N-terminus, the 474-residue chain is tRNA-2-methylthio-N(6)-dimethylallyladenosine synthase (474 aa).

Residues 3–120 (KKLHIKTWGC…LPEMINHVQE (118 aa)) form the MTTase N-terminal domain. Residues Cys-12, Cys-49, Cys-83, Cys-157, Cys-161, and Cys-164 each coordinate [4Fe-4S] cluster. The region spanning 143–375 (RAEGPTAFVS…QQRISQQAME (233 aa)) is the Radical SAM core domain. The 64-residue stretch at 378–441 (RKMVGTVQRV…ASSLRGILLR (64 aa)) folds into the TRAM domain.

It belongs to the methylthiotransferase family. MiaB subfamily. Monomer. It depends on [4Fe-4S] cluster as a cofactor.

It localises to the cytoplasm. It carries out the reaction N(6)-dimethylallyladenosine(37) in tRNA + (sulfur carrier)-SH + AH2 + 2 S-adenosyl-L-methionine = 2-methylsulfanyl-N(6)-dimethylallyladenosine(37) in tRNA + (sulfur carrier)-H + 5'-deoxyadenosine + L-methionine + A + S-adenosyl-L-homocysteine + 2 H(+). Its function is as follows. Catalyzes the methylthiolation of N6-(dimethylallyl)adenosine (i(6)A), leading to the formation of 2-methylthio-N6-(dimethylallyl)adenosine (ms(2)i(6)A) at position 37 in tRNAs that read codons beginning with uridine. This is tRNA-2-methylthio-N(6)-dimethylallyladenosine synthase from Yersinia pseudotuberculosis serotype O:3 (strain YPIII).